The primary structure comprises 122 residues: Large ribosomal subunit protein uL14 (122 aa).

The protein belongs to the universal ribosomal protein uL14 family. Part of the 50S ribosomal subunit. Forms a cluster with proteins L3 and L19. In the 70S ribosome, L14 and L19 interact and together make contacts with the 16S rRNA in bridges B5 and B8.

In terms of biological role, binds to 23S rRNA. Forms part of two intersubunit bridges in the 70S ribosome. The sequence is that of Large ribosomal subunit protein uL14 from Rickettsia felis (strain ATCC VR-1525 / URRWXCal2) (Rickettsia azadi).